A 345-amino-acid polypeptide reads, in one-letter code: Tropomodulin-4 (345 aa).

Residues 42-63 form a disordered region; the sequence is NMLLPAGLRQRDQTKKSPTGPL.

It belongs to the tropomodulin family. Binds to the N-terminus of tropomyosin and to actin. Highly expressed in skeletal muscle.

It localises to the cytoplasm. The protein localises to the cytoskeleton. In terms of biological role, blocks the elongation and depolymerization of the actin filaments at the pointed end. The Tmod/TM complex contributes to the formation of the short actin protofilament, which in turn defines the geometry of the membrane skeleton. This is Tropomodulin-4 (TMOD4) from Homo sapiens (Human).